Here is a 127-residue protein sequence, read N- to C-terminus: Fatty acid-binding protein, liver (127 aa).

Methionine 1 is subject to N-acetylmethionine. An N6-succinyllysine mark is found at lysine 31 and lysine 36. At serine 39 the chain carries Phosphoserine. Lysine 46 is subject to N6-succinyllysine. Serine 56 is subject to Phosphoserine. 3 positions are modified to N6-succinyllysine: lysine 57, lysine 78, and lysine 90. Serine 100 is subject to Phosphoserine. Position 105 is a deamidated asparagine; alternate (asparagine 105). The segment at residues 105–106 is a cross-link (isoaspartyl glycine isopeptide (Asn-Gly); alternate); it reads NG. Position 121 is an N6-succinyllysine (lysine 121).

Belongs to the calycin superfamily. Fatty-acid binding protein (FABP) family. Monomer. In terms of processing, deamidation and transpeptidation at the beta carboxyl of Asn-105 forms an isoaspartyl residue and Edman degradation appears as though blocked. This rearrangement gives rise to an extra negative charge carried by the acid form.

Its subcellular location is the cytoplasm. Its function is as follows. Plays a role in lipoprotein-mediated cholesterol uptake in hepatocytes. Binds cholesterol. Binds free fatty acids and their coenzyme A derivatives, bilirubin, and some other small molecules in the cytoplasm. May be involved in intracellular lipid transport. This is Fatty acid-binding protein, liver (FABP1) from Bos taurus (Bovine).